A 415-amino-acid polypeptide reads, in one-letter code: uncharacterized protein (415 aa).

The region spanning 1–55 (MSTGTVTIDRLGAQGDGVARTEAGPVFAPFTLPGETVSLAVNKANGTLISLKEAS) is the TRAM domain. Residues Cys63, Cys75, Cys78, and Cys152 each contribute to the [4Fe-4S] cluster site. S-adenosyl-L-methionine is bound by residues Gln252, Phe279, Glu299, and Asp347. Cys373 functions as the Nucleophile in the catalytic mechanism.

This sequence belongs to the class I-like SAM-binding methyltransferase superfamily. RNA M5U methyltransferase family.

This is an uncharacterized protein from Rhizobium meliloti (strain 1021) (Ensifer meliloti).